The primary structure comprises 211 residues: Small ribosomal subunit protein uS3 (211 aa).

Residues 39 to 107 (VTKYVESSFA…VPSLNVVEVK (69 aa)) form the KH type-2 domain.

The protein belongs to the universal ribosomal protein uS3 family. In terms of assembly, part of the 30S ribosomal subunit. Forms a tight complex with proteins S10 and S14.

Functionally, binds the lower part of the 30S subunit head. Binds mRNA in the 70S ribosome, positioning it for translation. The sequence is that of Small ribosomal subunit protein uS3 from Neorickettsia sennetsu (strain ATCC VR-367 / Miyayama) (Ehrlichia sennetsu).